The chain runs to 323 residues: HTH-type transcriptional activator CmpR (323 aa).

One can recognise an HTH lysR-type domain in the interval Leu4–Thr61. The segment at residues Phe21–Lys40 is a DNA-binding region (H-T-H motif). The interval Ile304–Val323 is disordered.

It belongs to the LysR transcriptional regulatory family.

It is found in the cytoplasm. Functionally, activates transcription of the cmpABCD operon under carbon dioxide-limited conditions. In Synechococcus elongatus (strain ATCC 33912 / PCC 7942 / FACHB-805) (Anacystis nidulans R2), this protein is HTH-type transcriptional activator CmpR (cmpR).